Consider the following 652-residue polypeptide: Trypanothione synthetase (652 aa).

Positions 34–174 (SNKHDHFFSG…QHKDGVWTII (141 aa)) constitute a Peptidase C51 domain. 328 to 330 (RFD) is a binding site for ATP. 3 residues coordinate Mg(2+): Asp-330, Glu-344, and Asn-346. Residues Lys-513, Lys-548, Gly-555, Gln-583, and 618 to 620 (IIT) each bind ATP.

It in the C-terminal section; belongs to the glutathionylspermidine synthase preATP-grasp family. Mg(2+) serves as cofactor. Post-translationally, the N-terminus is blocked.

The enzyme catalyses spermidine + glutathione + ATP = glutathionylspermidine + ADP + phosphate + H(+). The catalysed reaction is glutathionylspermidine + glutathione + ATP = trypanothione + ADP + phosphate + H(+). Conjugates glutathione (gamma-Glu-Cys-Gly) and glutathionylspermidine to form trypanothione (N(1),N(8)-bis(glutathionyl)spermidine), which is involved in maintaining intracellular thiol redox and in defense against oxidants. This chain is Trypanothione synthetase (TRS), found in Crithidia fasciculata.